A 143-amino-acid chain; its full sequence is Type II secretion system core protein G (143 aa).

Residues 1–8 constitute a propeptide, leader sequence; the sequence is MQKRRQSG. The residue at position 9 (Phe9) is an N-methylphenylalanine. Residues 9 to 29 traverse the membrane as a helical segment; the sequence is FTLLEVMVVIVILGILASLVV. The tract at residues 70–92 is disordered; that stretch reads QGLDALVNKPTAAPEPRSYRDGG.

The protein belongs to the GSP G family. As to quaternary structure, type II secretion system is composed of four main components: the outer membrane complex, the inner membrane complex, the cytoplasmic secretion ATPase and the periplasm-spanning pseudopilus. Forms homomultimers. Cleaved by the prepilin peptidase. In terms of processing, methylated by prepilin peptidase at the amino group of the N-terminal phenylalanine once the leader sequence is cleaved.

Its subcellular location is the cell inner membrane. Core component of the type II secretion system required for the energy-dependent secretion of extracellular factors such as proteases and toxins from the periplasm. Pseudopilin (pilin-like) protein that polymerizes to form the pseudopilus. Further polymerization triggers pseudopilus growth. This is Type II secretion system core protein G (exeG) from Aeromonas hydrophila.